The following is a 192-amino-acid chain: Pyridoxal 5'-phosphate synthase subunit PdxT (192 aa).

53–55 (GES) is a binding site for L-glutamine. Cys82 serves as the catalytic Nucleophile. L-glutamine-binding positions include Arg108 and 134-135 (IR). Active-site charge relay system residues include His170 and Glu172.

The protein belongs to the glutaminase PdxT/SNO family. As to quaternary structure, in the presence of PdxS, forms a dodecamer of heterodimers. Only shows activity in the heterodimer.

It catalyses the reaction aldehydo-D-ribose 5-phosphate + D-glyceraldehyde 3-phosphate + L-glutamine = pyridoxal 5'-phosphate + L-glutamate + phosphate + 3 H2O + H(+). The catalysed reaction is L-glutamine + H2O = L-glutamate + NH4(+). Its pathway is cofactor biosynthesis; pyridoxal 5'-phosphate biosynthesis. In terms of biological role, catalyzes the hydrolysis of glutamine to glutamate and ammonia as part of the biosynthesis of pyridoxal 5'-phosphate. The resulting ammonia molecule is channeled to the active site of PdxS. This Methanothermobacter thermautotrophicus (strain ATCC 29096 / DSM 1053 / JCM 10044 / NBRC 100330 / Delta H) (Methanobacterium thermoautotrophicum) protein is Pyridoxal 5'-phosphate synthase subunit PdxT.